Reading from the N-terminus, the 134-residue chain is MLQQQESPIPRLGVGEEGVVGRHVFGEVWGVNDKLLQDDEYLKNLVIKAAEVANMHLVDVKVWRFGGGDKGGVSVIALVLESHIAIHTWPAYNYATIDVYTCGEHSRPWDAYDYIIKQLNPKTFTKTIVDRSSK.

Residue Ser82 is the Schiff-base intermediate with substrate; via pyruvic acid of the active site. The residue at position 82 (Ser82) is a Pyruvic acid (Ser); by autocatalysis. Catalysis depends on His87, which acts as the Proton acceptor; for processing activity. Residue Cys102 is the Proton donor; for catalytic activity of the active site.

This sequence belongs to the prokaryotic AdoMetDC family. Type 1 subfamily. In terms of assembly, heterooctamer of four alpha and four beta chains arranged as a tetramer of alpha/beta heterodimers. Pyruvate is required as a cofactor. Is synthesized initially as an inactive proenzyme. Formation of the active enzyme involves a self-maturation process in which the active site pyruvoyl group is generated from an internal serine residue via an autocatalytic post-translational modification. Two non-identical subunits are generated from the proenzyme in this reaction, and the pyruvate is formed at the N-terminus of the alpha chain, which is derived from the carboxyl end of the proenzyme. The post-translation cleavage follows an unusual pathway, termed non-hydrolytic serinolysis, in which the side chain hydroxyl group of the serine supplies its oxygen atom to form the C-terminus of the beta chain, while the remainder of the serine residue undergoes an oxidative deamination to produce ammonia and the pyruvoyl group blocking the N-terminus of the alpha chain.

The catalysed reaction is L-arginine + H(+) = agmatine + CO2. It participates in amine and polyamine biosynthesis; agmatine biosynthesis; agmatine from L-arginine: step 1/1. Specifically catalyzes the decarboxylation of L-arginine to agmatine. Has no S-adenosylmethionine decarboxylase (AdoMetDC) activity. The protein is Arginine decarboxylase proenzyme of Caldivirga maquilingensis (strain ATCC 700844 / DSM 13496 / JCM 10307 / IC-167).